The chain runs to 299 residues: tRNA dimethylallyltransferase (299 aa).

Residue 5–12 (GPTASGKT) coordinates ATP. 7–12 (TASGKT) is a substrate binding site. 3 interaction with substrate tRNA regions span residues 30 to 33 (DSAL), 154 to 158 (QRLSR), and 235 to 240 (RCVGYR).

This sequence belongs to the IPP transferase family. Monomer. The cofactor is Mg(2+).

The catalysed reaction is adenosine(37) in tRNA + dimethylallyl diphosphate = N(6)-dimethylallyladenosine(37) in tRNA + diphosphate. Catalyzes the transfer of a dimethylallyl group onto the adenine at position 37 in tRNAs that read codons beginning with uridine, leading to the formation of N6-(dimethylallyl)adenosine (i(6)A). The sequence is that of tRNA dimethylallyltransferase from Shewanella denitrificans (strain OS217 / ATCC BAA-1090 / DSM 15013).